A 368-amino-acid chain; its full sequence is Outer membrane protein assembly factor BamC (368 aa).

The first 18 residues, 1–18, serve as a signal peptide directing secretion; the sequence is MTTKFFIGTAIAVSVLSA. Residue C19 is the site of N-palmitoyl cysteine attachment. C19 carries S-diacylglycerol cysteine lipidation.

Belongs to the BamC family. As to quaternary structure, part of the Bam complex.

The protein localises to the cell outer membrane. Functionally, part of the outer membrane protein assembly complex, which is involved in assembly and insertion of beta-barrel proteins into the outer membrane. This is Outer membrane protein assembly factor BamC from Pseudoalteromonas atlantica (strain T6c / ATCC BAA-1087).